A 31-amino-acid polypeptide reads, in one-letter code: Cytolysin Oshem 2 (31 aa).

The protein localises to the secreted. It is found in the nematocyst. The protein resides in the target cell membrane. In terms of biological role, cytolysin that shows weak hemolysis and weak myonecrosis. This chain is Cytolysin Oshem 2, found in Olindias sambaquiensis (Hydromedusa).